The primary structure comprises 601 residues: Elongation factor 4 (601 aa).

In terms of domain architecture, tr-type G spans 5–187 (IRKKNFCIIA…AICKYVPSPK (183 aa)). GTP-binding positions include 17 to 22 (DHGKST) and 134 to 137 (NKID).

It belongs to the TRAFAC class translation factor GTPase superfamily. Classic translation factor GTPase family. LepA subfamily.

Its subcellular location is the cell inner membrane. The enzyme catalyses GTP + H2O = GDP + phosphate + H(+). In terms of biological role, required for accurate and efficient protein synthesis under certain stress conditions. May act as a fidelity factor of the translation reaction, by catalyzing a one-codon backward translocation of tRNAs on improperly translocated ribosomes. Back-translocation proceeds from a post-translocation (POST) complex to a pre-translocation (PRE) complex, thus giving elongation factor G a second chance to translocate the tRNAs correctly. Binds to ribosomes in a GTP-dependent manner. In Borreliella afzelii (strain PKo) (Borrelia afzelii), this protein is Elongation factor 4.